The following is a 369-amino-acid chain: Delta(14)-sterol reductase (369 aa).

Transmembrane regions (helical) follow at residues Gln15 to Leu34, Cys54 to Val76, Leu86 to Val105, Phe146 to Val168, Ile178 to Glu195, Arg208 to Trp230, and Thr240 to Asn262. NADP(+)-binding positions include Lys265, Lys269, Leu289, Trp294, and Asn301–Tyr302. A helical membrane pass occupies residues Pro275–Ala297. The chain crosses the membrane as a helical span at residues Gly317–Trp336. NADP(+)-binding positions include Asp341, Cys345 to Tyr349, and Tyr356.

This sequence belongs to the ERG4/ERG24 family.

It is found in the membrane. The enzyme catalyses 4,4-dimethyl-5alpha-cholesta-8,24-dien-3beta-ol + NADP(+) = 4,4-dimethyl-5alpha-cholesta-8,14,24-trien-3beta-ol + NADPH + H(+). It participates in steroid biosynthesis; zymosterol biosynthesis; zymosterol from lanosterol: step 2/6. In terms of biological role, reduces the C14=C15 double bond of 4,4-dimethyl-cholesta-8,14,24-trienol to produce 4,4-dimethyl-cholesta-8,24-dienol. Required for cell division and expansion and is involved in proper organization of the embryo. The chain is Delta(14)-sterol reductase (FK) from Arabidopsis thaliana (Mouse-ear cress).